A 156-amino-acid polypeptide reads, in one-letter code: 6,7-dimethyl-8-ribityllumazine synthase (156 aa).

Residues phenylalanine 23, 57–59 (AFE), and 81–83 (AVI) each bind 5-amino-6-(D-ribitylamino)uracil. 86–87 (ST) lines the (2S)-2-hydroxy-3-oxobutyl phosphate pocket. Residue histidine 89 is the Proton donor of the active site. Residue phenylalanine 114 coordinates 5-amino-6-(D-ribitylamino)uracil. Arginine 128 contributes to the (2S)-2-hydroxy-3-oxobutyl phosphate binding site.

Belongs to the DMRL synthase family.

It carries out the reaction (2S)-2-hydroxy-3-oxobutyl phosphate + 5-amino-6-(D-ribitylamino)uracil = 6,7-dimethyl-8-(1-D-ribityl)lumazine + phosphate + 2 H2O + H(+). Its pathway is cofactor biosynthesis; riboflavin biosynthesis; riboflavin from 2-hydroxy-3-oxobutyl phosphate and 5-amino-6-(D-ribitylamino)uracil: step 1/2. Catalyzes the formation of 6,7-dimethyl-8-ribityllumazine by condensation of 5-amino-6-(D-ribitylamino)uracil with 3,4-dihydroxy-2-butanone 4-phosphate. This is the penultimate step in the biosynthesis of riboflavin. The sequence is that of 6,7-dimethyl-8-ribityllumazine synthase from Campylobacter curvus (strain 525.92).